The following is a 1358-amino-acid chain: Phosphoinositide 3-kinase regulatory subunit 4 (1358 aa).

A lipid anchor (N-myristoyl glycine) is attached at G2. A Protein kinase domain is found at 26 to 324 (FEYDKSLGST…AFPEIFYTFL (299 aa)). ATP is bound by residues 32 to 40 (LGSTRFFKV) and K53. D148 functions as the Proton acceptor in the catalytic mechanism. 3 HEAT repeats span residues 413 to 450 (ILLD…LVKE), 458 to 495 (IYPE…TALR), and 572 to 610 (KAND…YVGW). 4 positions are modified to phosphoserine: S808, S813, S853, and S865. Residues 875–898 (LPKGSDQEVIQTGKPPRSESSAGI) form a disordered region. WD repeat units follow at residues 991 to 1030 (EHKS…GKTT), 1040 to 1079 (RIGG…LPKS), 1093 to 1134 (KEDG…NAWT), 1139 to 1178 (LKSG…PISS), 1182 to 1223 (PSRA…RRFT), and 1237 to 1278 (PSPH…RSYV). Positions 1307–1326 (KQKVGPSDDTPRRGPESLPV) are disordered. The segment covering 1315–1326 (DTPRRGPESLPV) has biased composition (basic and acidic residues). Phosphothreonine is present on T1316. Residues 1327-1358 (GHHDIITDVATFQTTQGFIVTASRDGIVKVWK) form a WD 7 repeat.

Belongs to the protein kinase superfamily. Ser/Thr protein kinase family. In terms of assembly, component of the PI3K (PI3KC3/PI3K-III/class III phosphatidylinositol 3-kinase) complex the core of which is composed of the catalytic subunit PIK3C3, the regulatory subunit PIK3R4 and BECN1 associating with additional regulatory/auxiliary subunits to form alternative complex forms. Alternative complex forms containing a fourth regulatory subunit in a mutually exclusive manner are PI3K complex I (PI3KC3-C1) containing ATG14, and PI3K complex II (PI3KC3-C2) containing UVRAG. PI3KC3-C1 displays a V-shaped architecture with PIK3R4 serving as a bridge between PIK3C3 and the ATG14:BECN1 subcomplex. Both, PI3KC3-C1 and PI3KC3-C2, can associate with further regulatory subunits, such as RUBCN, SH3GLB1/Bif-1, AMBRA1 and NRBF2. PI3KC3-C1 probably associates with PIK3CB. Interacts with RAB7A in the presence of PIK3C3/VPS34. Interacts with NRBF2. Interacts with ARMC3. The cofactor is Mn(2+). Myristoylated. In terms of processing, probably autophosphorylated. Ubiquitously expressed.

It is found in the late endosome. The protein localises to the cytoplasmic vesicle. Its subcellular location is the autophagosome. It localises to the membrane. It carries out the reaction L-seryl-[protein] + ATP = O-phospho-L-seryl-[protein] + ADP + H(+). The catalysed reaction is L-threonyl-[protein] + ATP = O-phospho-L-threonyl-[protein] + ADP + H(+). Its function is as follows. Regulatory subunit of the PI3K complex that mediates formation of phosphatidylinositol 3-phosphate; different complex forms are believed to play a role in multiple membrane trafficking pathways: PI3KC3-C1 is involved in initiation of autophagosomes and PI3KC3-C2 in maturation of autophagosomes and endocytosis. Involved in regulation of degradative endocytic trafficking and cytokinesis, probably in the context of PI3KC3-C2. This Homo sapiens (Human) protein is Phosphoinositide 3-kinase regulatory subunit 4 (PIK3R4).